Here is a 515-residue protein sequence, read N- to C-terminus: Interferon-induced, double-stranded RNA-activated protein kinase (515 aa).

N-acetylalanine is present on Ala2. The region spanning 8 to 76 (FYMDKLNKYR…AKLAVDILDN (69 aa)) is the DRBM 1 domain. Lys68 is covalently cross-linked (Glycyl lysine isopeptide (Lys-Gly) (interchain with G-Cter in ISG15)). Phosphothreonine is present on Thr84. The region spanning 95–162 (NYIGLVNSFA…AKEAYQKLLK (68 aa)) is the DRBM 2 domain. Tyr96 bears the Phosphotyrosine; by autocatalysis mark. A Glycyl lysine isopeptide (Lys-Gly) (interchain with G-Cter in ISG15) cross-link involves residue Lys154. Tyr157 is subject to Phosphotyrosine; by autocatalysis. Positions 204–224 (ENVFTNGLGENKRKSGVKVSP) are disordered. Position 233 is a phosphothreonine (Thr233). Positions 241–515 (DFEDIEEIGL…ISEKKKRNTC (275 aa)) are interaction with TRAF5. One can recognise a Protein kinase domain in the interval 242-504 (FEDIEEIGLG…EILKTLAEWR (263 aa)). 248–256 (IGLGGFGQV) contributes to the ATP binding site. Tyr268 bears the Phosphotyrosine; by autocatalysis mark. Lys271 serves as a coordination point for ATP. Asp376 acts as the Proton acceptor in catalysis. Phosphothreonine; by autocatalysis is present on residues Thr409 and Thr414. Position 419 is a phosphoserine (Ser419).

Belongs to the protein kinase superfamily. Ser/Thr protein kinase family. GCN2 subfamily. As to quaternary structure, homodimer. Interacts with DNAJC3 and STRBP. Forms a complex with FANCA, FANCC, FANCG and HSP70. Interacts with ADAR/ADAR1. The inactive form interacts with NCK1. Interacts (via the kinase catalytic domain) with STAT3 (via SH2 domain), TRAF2 (C-terminus), TRAF5 (C-terminus) and TRAF6 (C-terminus). Interacts with MAP2K6, TARBP2, NLRP1, NLRC4 and AIM2. Interacts (via DRBM 1 domain) with DUS2L (via DRBM domain). Interacts with DHX9 (via N-terminus) and this interaction is dependent upon activation of the kinase. The inactive form interacts with GSN. Interacts with IKBKB/IKKB, NPM1, NLRP3 and IRS1. Post-translationally, autophosphorylated on several Ser, Thr and Tyr residues. Autophosphorylation of Thr-414 is dependent on Thr-409 and is stimulated by dsRNA binding and dimerization. Autophosphorylation apparently leads to the activation of the kinase. Tyrosine autophosphorylation is essential for efficient dsRNA-binding, dimerization, and kinase activation. As to expression, expressed in heart, lung, brain, kidney, testes, thymus and bone marrow.

Its subcellular location is the cytoplasm. It localises to the nucleus. The protein localises to the perinuclear region. The enzyme catalyses L-seryl-[protein] + ATP = O-phospho-L-seryl-[protein] + ADP + H(+). The catalysed reaction is L-threonyl-[protein] + ATP = O-phospho-L-threonyl-[protein] + ADP + H(+). It carries out the reaction L-tyrosyl-[protein] + ATP = O-phospho-L-tyrosyl-[protein] + ADP + H(+). With respect to regulation, initially produced in an inactive form and is activated by binding to viral dsRNA, which causes dimerization and autophosphorylation in the activation loop and stimulation of function. ISGylation can activate it in the absence of viral infection. Can also be activated by heparin, pro-inflammatory stimuli, growth factors, cytokines, oxidative stress and the cellular protein PRKRA. Activity is markedly stimulated by manganese ions. Activation is blocked by the cellular proteins TARBP2, DUS2L, NPM1, NCK1 and ADAR. In terms of biological role, IFN-induced dsRNA-dependent serine/threonine-protein kinase that phosphorylates the alpha subunit of eukaryotic translation initiation factor 2 (EIF2S1/eIF-2-alpha) and plays a key role in the innate immune response to viral infection. Inhibits viral replication via the integrated stress response (ISR): EIF2S1/eIF-2-alpha phosphorylation in response to viral infection converts EIF2S1/eIF-2-alpha in a global protein synthesis inhibitor, resulting to a shutdown of cellular and viral protein synthesis, while concomitantly initiating the preferential translation of ISR-specific mRNAs, such as the transcriptional activator ATF4. Exerts its antiviral activity on a wide range of DNA and RNA viruses including west nile virus (WNV), sindbis virus (SV), foot-and-mouth virus (FMDV), semliki Forest virus (SFV) and lymphocytic choriomeningitis virus (LCMV). Also involved in the regulation of signal transduction, apoptosis, cell proliferation and differentiation: phosphorylates other substrates including p53/TP53, PPP2R5A, DHX9, ILF3, and IRS1. In addition to serine/threonine-protein kinase activity, also has tyrosine-protein kinase activity and phosphorylates CDK1 at 'Tyr-4' upon DNA damage, facilitating its ubiquitination and proteasomal degradation. Either as an adapter protein and/or via its kinase activity, can regulate various signaling pathways (p38 MAP kinase, NF-kappa-B and insulin signaling pathways) and transcription factors (JUN, STAT1, STAT3, IRF1, ATF3) involved in the expression of genes encoding pro-inflammatory cytokines and IFNs. Activates the NF-kappa-B pathway via interaction with IKBKB and TRAF family of proteins and activates the p38 MAP kinase pathway via interaction with MAP2K6. Can act as both a positive and negative regulator of the insulin signaling pathway (ISP). Negatively regulates ISP by inducing the inhibitory phosphorylation of insulin receptor substrate 1 (IRS1) at 'Ser-312' and positively regulates ISP via phosphorylation of PPP2R5A which activates FOXO1, which in turn up-regulates the expression of insulin receptor substrate 2 (IRS2). Can regulate NLRP3 inflammasome assembly and the activation of NLRP3, NLRP1, AIM2 and NLRC4 inflammasomes. Plays a role in the regulation of the cytoskeleton by binding to gelsolin (GSN), sequestering the protein in an inactive conformation away from actin. The sequence is that of Interferon-induced, double-stranded RNA-activated protein kinase (Eif2ak2) from Mus musculus (Mouse).